The chain runs to 341 residues: Methionine import ATP-binding protein MetN 3 (341 aa).

One can recognise an ABC transporter domain in the interval 2-241; the sequence is ILLENVKKIY…PQQDITKRFV (240 aa). ATP is bound at residue 38 to 45; it reads GYSGAGKS.

Belongs to the ABC transporter superfamily. Methionine importer (TC 3.A.1.24) family. The complex is composed of two ATP-binding proteins (MetN), two transmembrane proteins (MetI) and a solute-binding protein (MetQ).

Its subcellular location is the cell membrane. The enzyme catalyses L-methionine(out) + ATP + H2O = L-methionine(in) + ADP + phosphate + H(+). It catalyses the reaction D-methionine(out) + ATP + H2O = D-methionine(in) + ADP + phosphate + H(+). Part of the ABC transporter complex MetNIQ involved in methionine import. Responsible for energy coupling to the transport system. The protein is Methionine import ATP-binding protein MetN 3 of Bacillus cereus (strain ATCC 10987 / NRS 248).